A 147-amino-acid chain; its full sequence is Hemoglobin subunit beta (147 aa).

An N-acetylvaline modification is found at valine 2. The Globin domain occupies 3–147 (HLTGEEKGIV…VATALAHKYH (145 aa)). A Phosphothreonine modification is found at threonine 13. A Phosphoserine modification is found at serine 45. Lysine 60 bears the N6-acetyllysine mark. A heme b-binding site is contributed by histidine 64. Position 83 is an N6-acetyllysine (lysine 83). Histidine 93 serves as a coordination point for heme b. Cysteine 94 is subject to S-nitrosocysteine. N6-acetyllysine is present on lysine 145.

Belongs to the globin family. As to quaternary structure, heterotetramer of two alpha chains and two beta chains. In terms of tissue distribution, red blood cells.

Functionally, involved in oxygen transport from the lung to the various peripheral tissues. This is Hemoglobin subunit beta (HBB) from Rhinolophus ferrumequinum (Greater horseshoe bat).